The chain runs to 94 residues: uncharacterized protein (94 aa).

Residues 1–22 (MIMKNCLLLGALLMGFTGVAMA) form the signal peptide.

This is an uncharacterized protein from Escherichia coli (strain K12).